The following is a 232-amino-acid chain: UPF0758 protein Amet_2289 (232 aa).

Positions 110-232 (RIKSPDDVSN…YYSLKEKSMM (123 aa)) constitute an MPN domain. Residues His-181, His-183, and Asp-194 each contribute to the Zn(2+) site. Residues 181-194 (HNHPSGDPSPSGED) carry the JAMM motif motif.

Belongs to the UPF0758 family.

This chain is UPF0758 protein Amet_2289, found in Alkaliphilus metalliredigens (strain QYMF).